The sequence spans 67 residues: Alpha-conotoxin G1.5 (67 aa).

Positions 1–21 (MGMRMMFTVFLLVALATTVVS) are cleaved as a signal peptide. A propeptide spanning residues 22-47 (FTSDRASDRRNAAVKAFDLISSTVKK) is cleaved from the precursor. 2 disulfides stabilise this stretch: Cys49-Cys55 and Cys50-Cys63. At Gln65 the chain carries Glutamine amide.

This sequence belongs to the conotoxin A superfamily. Expressed by the venom duct.

The protein resides in the secreted. Alpha-conotoxins act on postsynaptic membranes, they bind to the nicotinic acetylcholine receptors (nAChR) and thus inhibit them. Globular isomer (C1-C3; C2-C4) selectively inhibits neuronal (non-muscle) nAChR subtypes particularly human alpha-3-beta-2/CHRNA3-CHRNB2 (IC(50)=35.7 nM) and alpha-9-alpha-10/CHRNA9-CHRNA10 nAChRs (IC(50)=569 nM), while the ribbon isomer (C1-C4; C2-C3) shows weak inhibition on alpha-3-beta-2/CHRNA3-CHRNB2, but not on all other receptors tested. This chain is Alpha-conotoxin G1.5, found in Conus geographus (Geography cone).